We begin with the raw amino-acid sequence, 295 residues long: Tyrosine recombinase XerC (295 aa).

The Core-binding (CB) domain maps to 1-84 (MTLEEQFLSY…SLKSFYRLLT (84 aa)). Positions 105–289 (KLPEFFYQDE…SMQHLTAEYR (185 aa)) constitute a Tyr recombinase domain. Residues arginine 145, lysine 169, histidine 241, arginine 244, and histidine 267 contribute to the active site. Tyrosine 276 acts as the O-(3'-phospho-DNA)-tyrosine intermediate in catalysis.

The protein belongs to the 'phage' integrase family. XerC subfamily. Forms a cyclic heterotetrameric complex composed of two molecules of XerC and two molecules of XerD.

Its subcellular location is the cytoplasm. Site-specific tyrosine recombinase, which acts by catalyzing the cutting and rejoining of the recombining DNA molecules. The XerC-XerD complex is essential to convert dimers of the bacterial chromosome into monomers to permit their segregation at cell division. It also contributes to the segregational stability of plasmids. This chain is Tyrosine recombinase XerC, found in Lactobacillus leichmannii.